The primary structure comprises 121 residues: Large ribosomal subunit protein eL18 (121 aa).

Belongs to the eukaryotic ribosomal protein eL18 family.

The polypeptide is Large ribosomal subunit protein eL18 (Methanocaldococcus jannaschii (strain ATCC 43067 / DSM 2661 / JAL-1 / JCM 10045 / NBRC 100440) (Methanococcus jannaschii)).